Consider the following 352-residue polypeptide: Phosphoribosylformylglycinamidine cyclo-ligase (352 aa).

It belongs to the AIR synthase family.

Its subcellular location is the cytoplasm. The enzyme catalyses 2-formamido-N(1)-(5-O-phospho-beta-D-ribosyl)acetamidine + ATP = 5-amino-1-(5-phospho-beta-D-ribosyl)imidazole + ADP + phosphate + H(+). The protein operates within purine metabolism; IMP biosynthesis via de novo pathway; 5-amino-1-(5-phospho-D-ribosyl)imidazole from N(2)-formyl-N(1)-(5-phospho-D-ribosyl)glycinamide: step 2/2. This is Phosphoribosylformylglycinamidine cyclo-ligase from Pseudomonas putida (strain W619).